A 339-amino-acid polypeptide reads, in one-letter code: Phenylalanine--tRNA ligase alpha subunit (339 aa).

Residue Glu250 participates in Mg(2+) binding.

This sequence belongs to the class-II aminoacyl-tRNA synthetase family. Phe-tRNA synthetase alpha subunit type 1 subfamily. In terms of assembly, tetramer of two alpha and two beta subunits. Requires Mg(2+) as cofactor.

It localises to the cytoplasm. It carries out the reaction tRNA(Phe) + L-phenylalanine + ATP = L-phenylalanyl-tRNA(Phe) + AMP + diphosphate + H(+). This Bacteroides fragilis (strain ATCC 25285 / DSM 2151 / CCUG 4856 / JCM 11019 / LMG 10263 / NCTC 9343 / Onslow / VPI 2553 / EN-2) protein is Phenylalanine--tRNA ligase alpha subunit.